The sequence spans 133 residues: Ubiquitin-like FUBI-ribosomal protein eS30 fusion protein (133 aa).

Residues 84 to 110 form a disordered region; the sequence is GKVRGQTPKVAKQEKKKKKTGRAKRRM. A compositionally biased stretch (basic residues) spans 97-110; that stretch reads EKKKKKTGRAKRRM. Lys125 is subject to N6-succinyllysine.

The protein in the N-terminal section; belongs to the ubiquitin family. It in the C-terminal section; belongs to the eukaryotic ribosomal protein eS30 family. In terms of assembly, component of the 40S subunit of the ribosome. In terms of processing, FUBI is cleaved from ribosomal protein S30 by the deubiquitinase USP36 before the assembly of ribosomal protein S30 into pre-40S ribosomal particles. FUBI removal from ribosomal protein S30 is a crucial event for the final maturation of pre-40S particles.

It localises to the nucleus. Its subcellular location is the cytoplasm. Its function is as follows. May have pro-apoptotic activity. Functionally, component of the 40S subunit of the ribosome. Contributes to the assembly and function of 40S ribosomal subunits. This Mus musculus (Mouse) protein is Ubiquitin-like FUBI-ribosomal protein eS30 fusion protein (Fau).